Reading from the N-terminus, the 178-residue chain is Caveolin-1 (178 aa).

At Ser-2 the chain carries N-acetylserine. Ser-2 is subject to Phosphoserine. The segment at 2–94 is required for homooligomerization; that stretch reads SGGKYVDSEG…WKASFTTFTV (93 aa). Residues 2–104 lie on the Cytoplasmic side of the membrane; sequence SGGKYVDSEG…TKYWFYRLLS (103 aa). Lys-5 is subject to N6-acetyllysine; alternate. A Glycyl lysine isopeptide (Lys-Gly) (interchain with G-Cter in ubiquitin); alternate cross-link involves residue Lys-5. A Phosphotyrosine modification is found at Tyr-6. Ser-9 bears the Phosphoserine mark. Tyr-14 carries the phosphotyrosine; by ABL1 modification. Tyr-25 is modified (phosphotyrosine). Residues Lys-26 and Lys-30 each participate in a glycyl lysine isopeptide (Lys-Gly) (interchain with G-Cter in ubiquitin) cross-link. At Ser-37 the chain carries Phosphoserine. Residues Lys-39, Lys-47, and Lys-57 each participate in a glycyl lysine isopeptide (Lys-Gly) (interchain with G-Cter in ubiquitin) cross-link. Positions 82–94 are interaction with CAVIN3; that stretch reads DGIWKASFTTFTV. Positions 105-125 form an intramembrane region, helical; that stretch reads ALFGIPMALVWGIYFAILSFL. Residues 126–178 are Cytoplasmic-facing; the sequence is HIWAVVPCIKSFLIEIQCISRVYSIYVHTVCDPLFEAVGKIFSNVRINLQKEI. The interacts with SPRY1, SPRY2, SPRY3 and SPRY4 stretch occupies residues 131-142; it reads VPCIKSFLIEIQ. 3 S-palmitoyl cysteine lipidation sites follow: Cys-133, Cys-143, and Cys-156. The segment at 149 to 160 is interacts with SPRY1, SPRY2, and SPRY4; sequence SIYVHTVCDPLF. Residues 167–178 are interacts with SPRY1, SPRY2, SPRY3 and SPRY4; sequence FSNVRINLQKEI.

The protein belongs to the caveolin family. In terms of assembly, homooligomer. Interacts with GLIPR2. Interacts with NOSTRIN. Interacts with SNAP25 and STX1A. Interacts (via the N-terminus) with DPP4; the interaction is direct. Interacts with CTNNB1, CDH1 and JUP. Interacts with PACSIN2; this interaction induces membrane tubulation. Interacts with SLC7A9. Interacts with BMX and BTK. Interacts with TGFBR1. Interacts with CAVIN3 (via leucine-zipper domain) in a cholesterol-sensitive manner. Interacts with CAVIN1. Interacts with EHD2 in a cholesterol-dependent manner. Forms a ternary complex with UBXN6 and VCP; mediates CAV1 targeting to lysosomes for degradation. Interacts with ABCG1; this interaction regulates ABCG1-mediated cholesterol efflux. Interacts with NEU3; this interaction enhances NEU3 sialidase activity within caveola. Interacts (via C-terminus) with SPRY1, SPRY2 (via C-terminus), SPRY3, and SPRY4. Interacts with IGFBP5; this interaction allows trafficking of IGFBP5 from the plasma membrane to the nucleus. Post-translationally, phosphorylated at Tyr-14 by ABL1 in response to oxidative stress. Ubiquitinated. Undergo monoubiquitination and multi- and/or polyubiquitination. Monoubiquitination of N-terminal lysines promotes integration in a ternary complex with UBXN6 and VCP which promotes oligomeric CAV1 targeting to lysosomes for degradation. Ubiquitinated by ZNRF1; leading to degradation and modulation of the TLR4-mediated immune response.

The protein localises to the golgi apparatus membrane. It is found in the cell membrane. The protein resides in the membrane. It localises to the caveola. Its subcellular location is the membrane raft. May act as a scaffolding protein within caveolar membranes. Forms a stable heterooligomeric complex with CAV2 that targets to lipid rafts and drives caveolae formation. Mediates the recruitment of CAVIN proteins (CAVIN1/2/3/4) to the caveolae. Interacts directly with G-protein alpha subunits and can functionally regulate their activity. Involved in the costimulatory signal essential for T-cell receptor (TCR)-mediated T-cell activation. Its binding to DPP4 induces T-cell proliferation and NF-kappa-B activation in a T-cell receptor/CD3-dependent manner. Recruits CTNNB1 to caveolar membranes and may regulate CTNNB1-mediated signaling through the Wnt pathway. Negatively regulates TGFB1-mediated activation of SMAD2/3 by mediating the internalization of TGFBR1 from membrane rafts leading to its subsequent degradation. Binds 20(S)-hydroxycholesterol (20(S)-OHC). The chain is Caveolin-1 (CAV1) from Papio anubis (Olive baboon).